A 200-amino-acid polypeptide reads, in one-letter code: Mpv17-like protein 2 (200 aa).

3 helical membrane passes run 24–40, 63–83, and 102–122; these read ALLL…MAAG, ASMF…YLWL, and VLVD…LGLG.

This sequence belongs to the peroxisomal membrane protein PXMP2/4 family. In terms of assembly, interacts with the large mitochondrial ribosomal subunit.

The protein localises to the membrane. It localises to the mitochondrion inner membrane. Its function is as follows. Required for the assembly and stability of the mitochondrial ribosome. Is a positive regulator of mitochondrial protein synthesis. This Mus musculus (Mouse) protein is Mpv17-like protein 2 (Mpv17l2).